Consider the following 810-residue polypeptide: Transmembrane GTPase Marf (810 aa).

Over 1–637 the chain is Cytoplasmic; that stretch reads MAAYLNRTIS…TTTPVEATPV (637 aa). A Phosphothreonine modification is found at Thr-8. Residues 13 to 40 form a disordered region; the sequence is TGQTGPADDDRHASSTDTVDKSGPGSPL. The span at 20–32 shows a compositional bias: basic and acidic residues; the sequence is DDDRHASSTDTVD. Position 38 is a phosphoserine (Ser-38). The region spanning 134–382 is the Dynamin-type G domain; sequence QRDHMKVAFF…IRYFEFQDFE (249 aa). Residues 144 to 151 are G1 motif; sequence GRTSNGKS. GTP is bound at residue 147–152; it reads SNGKSS. The segment at 170-171 is G2 motif; sequence TT. The tract at residues 239 to 242 is G3 motif; the sequence is DSPG. 298-301 is a GTP binding site; it reads NRWD. Positions 298–301 are G4 motif; the sequence is NRWD. A region of interest (G5 motif) is located at residue Lys-327. Ser-345 provides a ligand contact to GTP. Positions 427-476 form a coiled coil; sequence RNLKQDQKNLLTERIQGTETQMMQVTREMKMKIHNMVEEVEEKVSKALNE. A Phosphothreonine modification is found at Thr-553. Ser-554 carries the phosphoserine modification. Thr-555 is subject to Phosphothreonine. Residues 609-630 are disordered; it reads GQPALVNRQSSIGHSVSTPTTT. A helical membrane pass occupies residues 638–648; the sequence is CLLPAPVVAGI. Over 649-668 the chain is Mitochondrial intermembrane; sequence TPEQLSLISRFAVSSIGSQG. A helical transmembrane segment spans residues 669-689; it reads TVGGLVVAGVMLKTIGWRVLV. Over 690-810 the chain is Cytoplasmic; sequence GVGALYGCIY…IFEHNYISPQ (121 aa). Residues 759–806 adopt a coiled-coil conformation; that stretch reads TATTDMNDELKTLDSQLNILEANQKQLKLLRNKANYIQNELDIFEHNY.

This sequence belongs to the TRAFAC class dynamin-like GTPase superfamily. Dynamin/Fzo/YdjA family. Mitofusin subfamily. Interacts with Mul1. In terms of processing, ubiquitinated by park and Mul1. Ubiquitinated, probably by HUWE1, when dietary stearate (C18:0) levels are low; ubiquitination inhibits mitochondrial fusion. As to expression, widely expressed in embryos, accumulating in the mesoderm and endoderm during gut development. In the male germ line, it is expressed in spermatogonia, spermatocytes and early spermatids.

It localises to the mitochondrion outer membrane. The catalysed reaction is GTP + H2O = GDP + phosphate + H(+). In terms of biological role, mitochondrial outer membrane GTPase that mediates mitochondrial clustering and fusion. Mitochondrial fusion is the physical merging of mitochondria that gives rise to mitochondrial networks, and this process is counterbalanced by mitochondrial fission which fragments networks. Promotes, but is not required for park recruitment to dysfunctional mitochondria. The sequence is that of Transmembrane GTPase Marf (Marf) from Drosophila melanogaster (Fruit fly).